The primary structure comprises 441 residues: Amino-acid acetyltransferase (441 aa).

The region spanning 295–434 (EQVRRATIND…QELYNYQRRS (140 aa)) is the N-acetyltransferase domain.

This sequence belongs to the acetyltransferase family. ArgA subfamily. In terms of assembly, homohexamer.

The protein resides in the cytoplasm. It carries out the reaction L-glutamate + acetyl-CoA = N-acetyl-L-glutamate + CoA + H(+). The protein operates within amino-acid biosynthesis; L-arginine biosynthesis; N(2)-acetyl-L-ornithine from L-glutamate: step 1/4. This is Amino-acid acetyltransferase from Yersinia pseudotuberculosis serotype O:1b (strain IP 31758).